We begin with the raw amino-acid sequence, 227 residues long: UPF0441 protein YPO0661/y3517/YP_2976 (227 aa).

The segment at 198–227 is disordered; the sequence is GGFGESVAKQSSMQRSAATSSKTTTRSMGG. The segment covering 212–227 has biased composition (low complexity); it reads RSAATSSKTTTRSMGG.

This sequence belongs to the UPF0441 family.

This is UPF0441 protein YPO0661/y3517/YP_2976 from Yersinia pestis.